Here is a 1047-residue protein sequence, read N- to C-terminus: Exportin-6 (1047 aa).

One can recognise an Importin N-terminal domain in the interval 32–98 (IDTILNNYKA…KGLLLDIYLN (67 aa)).

The protein belongs to the exportin family.

Its subcellular location is the nucleus. The protein localises to the cytoplasm. Functionally, probably mediates the nuclear export of actin and profilin-actin complexes. This is Exportin-6 (xpo6) from Dictyostelium discoideum (Social amoeba).